Reading from the N-terminus, the 275-residue chain is Nitrogenase iron protein 1 (275 aa).

Residue 9-16 (GKGGIGKS) participates in ATP binding. C97 is a binding site for [4Fe-4S] cluster. Residue R100 is modified to ADP-ribosylarginine; by dinitrogenase reductase ADP-ribosyltransferase. C132 is a [4Fe-4S] cluster binding site.

The protein belongs to the NifH/BchL/ChlL family. In terms of assembly, homodimer. It depends on [4Fe-4S] cluster as a cofactor. The reversible ADP-ribosylation of Arg-100 inactivates the nitrogenase reductase and regulates nitrogenase activity.

It carries out the reaction N2 + 8 reduced [2Fe-2S]-[ferredoxin] + 16 ATP + 16 H2O = H2 + 8 oxidized [2Fe-2S]-[ferredoxin] + 2 NH4(+) + 16 ADP + 16 phosphate + 6 H(+). The key enzymatic reactions in nitrogen fixation are catalyzed by the nitrogenase complex, which has 2 components: the iron protein and the molybdenum-iron protein. The protein is Nitrogenase iron protein 1 (nifH1) of Methanosarcina barkeri.